The following is a 664-amino-acid chain: Ubiquinol oxidase subunit 1 (664 aa).

The next 2 helical transmembrane spans lie at Pro-15 to Ile-35 and Leu-57 to Ile-77. His-106 serves as a coordination point for heme b. Transmembrane regions (helical) follow at residues Ile-109 to Leu-129, Val-136 to Val-156, Tyr-190 to Val-210, Leu-233 to Leu-253, Leu-278 to Phe-298, Met-316 to Phe-336, Phe-347 to Leu-367, Trp-383 to Ile-403, Leu-414 to Cys-434, Ala-456 to Phe-476, Ala-490 to Ala-510, and Ala-603 to Val-623. Residues His-284, Tyr-288, His-333, and His-334 each contribute to the Cu cation site. The segment at residues His-284–Tyr-288 is a cross-link (1'-histidyl-3'-tyrosine (His-Tyr)). His-419 lines the Fe(II)-heme a pocket. His-421 serves as a coordination point for heme b.

Belongs to the heme-copper respiratory oxidase family. Heterotetramer of the subunits 1, 2, 3 and 4.

The protein resides in the cell membrane. Functionally, catalytic subunit of the enzyme. Electrons originating in a quinol are transferred to the bimetallic center formed by heme a and copper B. In Acetobacter aceti, this protein is Ubiquinol oxidase subunit 1 (cyaA).